The primary structure comprises 187 residues: MIVLGVDPGSVHTGYGVVLCNGQKFSLVACGLIRLSSNQSIADRIKIIYDELGAIIAEYNPQRLALETAYVNRNPQSALKLGQVRGAIVALTMNKGLELHEYAPREVKYVLTGKGSAGKEQVSYMARHFLNIQEPIKPYDVTDALGIALCDLLCDAKGGSPRRGSGSRKSARGGWEDFVRTNPELIV.

Active-site residues include Asp-7, Glu-67, and Asp-140. Mg(2+) contacts are provided by Asp-7, Glu-67, and Asp-140.

The protein belongs to the RuvC family. Homodimer which binds Holliday junction (HJ) DNA. The HJ becomes 2-fold symmetrical on binding to RuvC with unstacked arms; it has a different conformation from HJ DNA in complex with RuvA. In the full resolvosome a probable DNA-RuvA(4)-RuvB(12)-RuvC(2) complex forms which resolves the HJ. Mg(2+) serves as cofactor.

The protein resides in the cytoplasm. The catalysed reaction is Endonucleolytic cleavage at a junction such as a reciprocal single-stranded crossover between two homologous DNA duplexes (Holliday junction).. Its function is as follows. The RuvA-RuvB-RuvC complex processes Holliday junction (HJ) DNA during genetic recombination and DNA repair. Endonuclease that resolves HJ intermediates. Cleaves cruciform DNA by making single-stranded nicks across the HJ at symmetrical positions within the homologous arms, yielding a 5'-phosphate and a 3'-hydroxyl group; requires a central core of homology in the junction. The consensus cleavage sequence is 5'-(A/T)TT(C/G)-3'. Cleavage occurs on the 3'-side of the TT dinucleotide at the point of strand exchange. HJ branch migration catalyzed by RuvA-RuvB allows RuvC to scan DNA until it finds its consensus sequence, where it cleaves and resolves the cruciform DNA. This Prosthecochloris aestuarii (strain DSM 271 / SK 413) protein is Crossover junction endodeoxyribonuclease RuvC.